The chain runs to 268 residues: MATVPELTSEMMAYHSGNENDLFFEADGPNYMKSCFQDLDLCCPDEGIQLRISCQPYNKSFRQVLSVVVALEKLRQKAVPCPQAFQDDGLRTFFSLIFEEEPVLCNTWDDYSLECDAVRSLHCRLQDAQQKSLVLSGTYELKALHLNAENLNQQVVFSMSFVQGEESNDKIPVALGLRGKNLYLSCVMKDDKPTLQLESVDPNRYPKKKMEKRFVFNKIEIKDKLEFESAQFPNWYISTSQTEYMPVFLGNNSGGQDLIDFSMEFVSS.

The propeptide occupies 1–116 (MATVPELTSE…TWDDYSLECD (116 aa)).

The protein belongs to the IL-1 family. Monomer. In its precursor form, weakly interacts with full-length MEFV; the mature cytokine does not interact at all. Interacts with integrins ITGAV:ITGBV and ITGA5:ITGB1; integrin-binding is required for IL1B signaling. Interacts with cargo receptor TMED10; the interaction is direct and is required for the secretion of IL1B mature form. Interacts with HSP90AB1; the interaction facilitates cargo translocation into the ERGIC. Interacts with HSP90B1; the interaction facilitates cargo translocation into the ERGIC.

It is found in the cytoplasm. It localises to the cytosol. The protein localises to the secreted. The protein resides in the lysosome. Its subcellular location is the extracellular exosome. Functionally, potent pro-inflammatory cytokine. Initially discovered as the major endogenous pyrogen, induces prostaglandin synthesis, neutrophil influx and activation, T-cell activation and cytokine production, B-cell activation and antibody production, and fibroblast proliferation and collagen production. Promotes Th17 differentiation of T-cells. Synergizes with IL12/interleukin-12 to induce IFNG synthesis from T-helper 1 (Th1) cells. Plays a role in angiogenesis by inducing VEGF production synergistically with TNF and IL6. Involved in transduction of inflammation downstream of pyroptosis: its mature form is specifically released in the extracellular milieu by passing through the gasdermin-D (GSDMD) pore. This Oryctolagus cuniculus (Rabbit) protein is Interleukin-1 beta (IL1B).